Consider the following 80-residue polypeptide: Conotoxin Cl10.1 (80 aa).

A signal peptide spans 1–20 (MTTLGMTMLVLLLLLPLATC). Residues 21-36 (LGDGERSPWDSLLRAL) constitute a propeptide that is removed on maturation.

Contains 4 disulfide bonds. In terms of tissue distribution, expressed by the venom duct.

It is found in the secreted. The polypeptide is Conotoxin Cl10.1 (Californiconus californicus (California cone)).